Here is a 401-residue protein sequence, read N- to C-terminus: Aspartokinase (401 aa).

This sequence belongs to the aspartokinase family.

The enzyme catalyses L-aspartate + ATP = 4-phospho-L-aspartate + ADP. The protein operates within amino-acid biosynthesis; L-lysine biosynthesis via DAP pathway; (S)-tetrahydrodipicolinate from L-aspartate: step 1/4. Its pathway is amino-acid biosynthesis; L-methionine biosynthesis via de novo pathway; L-homoserine from L-aspartate: step 1/3. It functions in the pathway amino-acid biosynthesis; L-threonine biosynthesis; L-threonine from L-aspartate: step 1/5. The sequence is that of Aspartokinase (lysC) from Rickettsia conorii (strain ATCC VR-613 / Malish 7).